A 677-amino-acid polypeptide reads, in one-letter code: UvrABC system protein B (677 aa).

One can recognise a Helicase ATP-binding domain in the interval 25–412; that stretch reads DGVNSGREYQ…SGAIIEQVIR (388 aa). 38 to 45 provides a ligand contact to ATP; the sequence is GATGTGKT. Positions 91-114 match the Beta-hairpin motif; sequence YYDYYQPEAYVPVSDTYIAKTSSI. Residues 429 to 591 form the Helicase C-terminal domain; it reads QVEDLLDEIR…IVPMPAGKKA (163 aa). The 36-residue stretch at 639 to 674 folds into the UVR domain; the sequence is PQLIDELETKMKKSAKDLDFENAAKLRDKIHQLRKK.

Belongs to the UvrB family. Forms a heterotetramer with UvrA during the search for lesions. Interacts with UvrC in an incision complex.

The protein resides in the cytoplasm. Its function is as follows. The UvrABC repair system catalyzes the recognition and processing of DNA lesions. A damage recognition complex composed of 2 UvrA and 2 UvrB subunits scans DNA for abnormalities. Upon binding of the UvrA(2)B(2) complex to a putative damaged site, the DNA wraps around one UvrB monomer. DNA wrap is dependent on ATP binding by UvrB and probably causes local melting of the DNA helix, facilitating insertion of UvrB beta-hairpin between the DNA strands. Then UvrB probes one DNA strand for the presence of a lesion. If a lesion is found the UvrA subunits dissociate and the UvrB-DNA preincision complex is formed. This complex is subsequently bound by UvrC and the second UvrB is released. If no lesion is found, the DNA wraps around the other UvrB subunit that will check the other stand for damage. This is UvrABC system protein B from Prochlorococcus marinus (strain SARG / CCMP1375 / SS120).